The following is a 517-amino-acid chain: L-amino-acid oxidase (517 aa).

Residues methionine 1–cysteine 18 form the signal peptide. Cysteines 29 and 192 form a disulfide. FAD contacts are provided by residues methionine 62–alanine 63, glutamate 82–alanine 83, arginine 90, and glycine 106–arginine 109. A substrate-binding site is contributed by arginine 109. Asparagine 191 carries an N-linked (GlcNAc...) asparagine glycan. Residue valine 280 coordinates FAD. A disulfide bridge connects residues cysteine 350 and cysteine 431. Tyrosine 391 is a substrate binding site. Residues glutamate 476 and glycine 483–threonine 488 each bind FAD. Glycine 483–tryptophan 484 is a substrate binding site.

It belongs to the flavin monoamine oxidase family. FIG1 subfamily. As to quaternary structure, homodimer; non-covalently linked. FAD serves as cofactor. Post-translationally, N-glycosylated. As to expression, expressed by the venom gland.

It is found in the secreted. It catalyses the reaction an L-alpha-amino acid + O2 + H2O = a 2-oxocarboxylate + H2O2 + NH4(+). Catalyzes an oxidative deamination of predominantly hydrophobic and aromatic L-amino acids, thus producing hydrogen peroxide that may contribute to the diverse toxic effects of this enzyme. Exhibits diverse biological activities, such as hemorrhage, hemolysis, edema, apoptosis of vascular endothelial cells or tumor cell lines, antibacterial and antiparasitic activities, as well as regulation of platelet aggregation. Its effect on platelets is controversial, since it either induces aggregation or inhibits agonist-induced aggregation. These different effects are probably due to different experimental conditions. The chain is L-amino-acid oxidase from Demansia vestigiata (Lesser black whip snake).